The sequence spans 745 residues: Elongation factor G, mitochondrial (745 aa).

A tr-type G domain is found at 40 to 317; that stretch reads ERIRNIGISA…AVLDYLPNPG (278 aa). GTP is bound by residues 49-56, 116-120, and 170-173; these read AHIDSGKT, DTPGH, and NKLD.

This sequence belongs to the TRAFAC class translation factor GTPase superfamily. Classic translation factor GTPase family. EF-G/EF-2 subfamily.

The protein localises to the mitochondrion. It functions in the pathway protein biosynthesis; polypeptide chain elongation. In terms of biological role, mitochondrial GTPase that catalyzes the GTP-dependent ribosomal translocation step during translation elongation. During this step, the ribosome changes from the pre-translocational (PRE) to the post-translocational (POST) state as the newly formed A-site-bound peptidyl-tRNA and P-site-bound deacylated tRNA move to the P and E sites, respectively. Catalyzes the coordinated movement of the two tRNA molecules, the mRNA and conformational changes in the ribosome. Essential during development as it acts as a retrograde signal from mitochondria to the nucleus to slow down cell proliferation if mitochondrial energy output is low. This is Elongation factor G, mitochondrial from Drosophila yakuba (Fruit fly).